The following is a 249-amino-acid chain: 5'-nucleotidase SurE (249 aa).

D8, D9, S39, and N91 together coordinate a divalent metal cation.

Belongs to the SurE nucleotidase family. It depends on a divalent metal cation as a cofactor.

Its subcellular location is the cytoplasm. It carries out the reaction a ribonucleoside 5'-phosphate + H2O = a ribonucleoside + phosphate. Functionally, nucleotidase that shows phosphatase activity on nucleoside 5'-monophosphates. This chain is 5'-nucleotidase SurE, found in Stutzerimonas stutzeri (strain A1501) (Pseudomonas stutzeri).